A 225-amino-acid polypeptide reads, in one-letter code: PKHD-type hydroxylase Smlt1146 (225 aa).

The Fe2OG dioxygenase domain maps to 78-177 (KYLPPRFNRY…RVASFFWVQS (100 aa)). Fe cation is bound by residues H96, D98, and H158. R168 lines the 2-oxoglutarate pocket.

The cofactor is Fe(2+). L-ascorbate serves as cofactor.

The chain is PKHD-type hydroxylase Smlt1146 from Stenotrophomonas maltophilia (strain K279a).